The sequence spans 201 residues: MDLLEFVDFLAKALNIHESKYDYQHVIYIDDETNVKILCNGCKNIFKTTPHTHLYLKNGECSKCFPCRKYKKLTTEKIISKLEKKYSDDFDYSEIDYRGVNYPVIISCKKCKNRFSVLPKEFLRNPKCRACGRKKNLSSREYVERAVLIHGSKYDYSKIEYRGLKCDIEIICNNCGILLKINARNHLRGRKCGCLLGNKTS.

This is an uncharacterized protein from Acanthamoeba polyphaga mimivirus (APMV).